The primary structure comprises 186 residues: UPF0398 protein LBUL_0921 (186 aa).

Belongs to the UPF0398 family.

The chain is UPF0398 protein LBUL_0921 from Lactobacillus delbrueckii subsp. bulgaricus (strain ATCC BAA-365 / Lb-18).